A 184-amino-acid chain; its full sequence is Ribosome-recycling factor (184 aa).

Belongs to the RRF family.

It is found in the cytoplasm. Its function is as follows. Responsible for the release of ribosomes from messenger RNA at the termination of protein biosynthesis. May increase the efficiency of translation by recycling ribosomes from one round of translation to another. This chain is Ribosome-recycling factor, found in Fervidobacterium nodosum (strain ATCC 35602 / DSM 5306 / Rt17-B1).